A 421-amino-acid polypeptide reads, in one-letter code: MASTKEISQYLKRFSQLDAKRFAVVKVGGAVLRDDVDALTSSLSFLQEVGLTPIVLHGAGPQLDEELTAAGIQKKTVNGFRVTLPETMAIVRKVFHTSNLQLIEALQRNGARATSITGGVFEAHYLDQETYGLVGEISAVNLAPIEASLRAASIPVIASLGETPSGQILNINADVAANELVHVLQPYKIIFLTGTGGLLDADGKIINSINLSTEYEQLIQQPWVYGGMKLKIEQIKHLLDRLPLESSVSITRPADLAKELFTHKGSGTLVRRGERVIRATTWKDLDLPRLQHLIQSSFRRTLIPHYFETTPLLRAYVSENYRAAVILTKLGNVPYLDKFAVLDDAQGEGLGRAVWSIMREETPQLFWRSRHNNQANAFYYAESDGYYKQDHWKIFWNGLHHFQQIQQCVAHCAQHPPTLID.

The acetylglutamate kinase stretch occupies residues 1–252 (MASTKEISQY…PLESSVSITR (252 aa)). Residues 59–60 (AG), Arg-81, and Asn-170 contribute to the substrate site. Residues 274 to 420 (ERVIRATTWK…HCAQHPPTLI (147 aa)) enclose the N-acetyltransferase domain.

The protein in the N-terminal section; belongs to the acetylglutamate kinase family. ArgB subfamily.

Its subcellular location is the cytoplasm. The catalysed reaction is N-acetyl-L-glutamate + ATP = N-acetyl-L-glutamyl 5-phosphate + ADP. It participates in amino-acid biosynthesis; L-arginine biosynthesis; N(2)-acetyl-L-ornithine from L-glutamate: step 2/4. This Xylella fastidiosa (strain 9a5c) protein is Acetylglutamate kinase (argB).